The sequence spans 346 residues: N-acetyl-gamma-glutamyl-phosphate reductase (346 aa).

Cys150 is a catalytic residue.

Belongs to the NAGSA dehydrogenase family. Type 1 subfamily.

The protein localises to the cytoplasm. It catalyses the reaction N-acetyl-L-glutamate 5-semialdehyde + phosphate + NADP(+) = N-acetyl-L-glutamyl 5-phosphate + NADPH + H(+). Its pathway is amino-acid biosynthesis; L-arginine biosynthesis; N(2)-acetyl-L-ornithine from L-glutamate: step 3/4. Catalyzes the NADPH-dependent reduction of N-acetyl-5-glutamyl phosphate to yield N-acetyl-L-glutamate 5-semialdehyde. The sequence is that of N-acetyl-gamma-glutamyl-phosphate reductase from Alkaliphilus metalliredigens (strain QYMF).